Here is an 87-residue protein sequence, read N- to C-terminus: Large ribosomal subunit protein bL31B (87 aa).

It belongs to the bacterial ribosomal protein bL31 family. Type B subfamily. Part of the 50S ribosomal subunit.

This chain is Large ribosomal subunit protein bL31B, found in Burkholderia vietnamiensis (strain G4 / LMG 22486) (Burkholderia cepacia (strain R1808)).